The sequence spans 437 residues: UDP-glucosyl transferase 79L3 (437 aa).

The active-site Proton acceptor is histidine 18. Aspartate 117 acts as the Charge relay in catalysis. Serine 254, tryptophan 312, valine 313, histidine 330, serine 335, and glutamate 338 together coordinate UDP.

It belongs to the UDP-glycosyltransferase family. In terms of tissue distribution, mainly expressed in flowers, flower buds and young leaves, and, to a lesser extent, in old leaves, stems and roots.

It participates in secondary metabolite biosynthesis; terpenoid biosynthesis. In terms of biological role, component of the oleanane-type triterpene saponins (e.g. saponarioside A and saponarioside B) biosynthetic pathway, leading to the production of natural products with detergent properties used as traditional sources of soap. A glycosyltransferase that mediates the conversion of QA-triFR to QA-triFRX via the elongation of the C-28 sugar chain with a D-xylose. The chain is UDP-glucosyl transferase 79L3 from Saponaria officinalis (Common soapwort).